The primary structure comprises 240 residues: Methylthioribulose-1-phosphate dehydratase (240 aa).

Substrate is bound at residue cysteine 99. Positions 116 and 118 each coordinate Zn(2+). Glutamate 145 acts as the Proton donor/acceptor in catalysis. Residue histidine 201 participates in Zn(2+) binding.

It belongs to the aldolase class II family. MtnB subfamily. Zn(2+) is required as a cofactor.

It localises to the cytoplasm. It carries out the reaction 5-(methylsulfanyl)-D-ribulose 1-phosphate = 5-methylsulfanyl-2,3-dioxopentyl phosphate + H2O. It participates in amino-acid biosynthesis; L-methionine biosynthesis via salvage pathway; L-methionine from S-methyl-5-thio-alpha-D-ribose 1-phosphate: step 2/6. Catalyzes the dehydration of methylthioribulose-1-phosphate (MTRu-1-P) into 2,3-diketo-5-methylthiopentyl-1-phosphate (DK-MTP-1-P). This chain is Methylthioribulose-1-phosphate dehydratase, found in Paracoccidioides lutzii (strain ATCC MYA-826 / Pb01) (Paracoccidioides brasiliensis).